A 61-amino-acid polypeptide reads, in one-letter code: Cytochrome c oxidase subunit 9, mitochondrial (61 aa).

Over Met-1–Lys-13 the chain is Mitochondrial matrix. The helical transmembrane segment at Ile-14 to Glu-36 threads the bilayer. The Mitochondrial intermembrane portion of the chain corresponds to His-37–Glu-56. Positions Ala-57–Ala-61 are cleaved as a propeptide — removed in mature form.

It belongs to the fungal cytochrome c oxidase subunit 7a family. In terms of assembly, component of the cytochrome c oxidase (complex IV, CIV), a multisubunit enzyme composed of a catalytic core of 3 subunits and several supernumerary subunits. The complex exists as a monomer or a dimer and forms supercomplexes (SCs) in the inner mitochondrial membrane with ubiquinol-cytochrome c oxidoreductase (cytochrome b-c1 complex, complex III, CIII).

Its subcellular location is the mitochondrion inner membrane. It functions in the pathway energy metabolism; oxidative phosphorylation. Component of the cytochrome c oxidase, the last enzyme in the mitochondrial electron transport chain which drives oxidative phosphorylation. The respiratory chain contains 3 multisubunit complexes succinate dehydrogenase (complex II, CII), ubiquinol-cytochrome c oxidoreductase (cytochrome b-c1 complex, complex III, CIII) and cytochrome c oxidase (complex IV, CIV), that cooperate to transfer electrons derived from NADH and succinate to molecular oxygen, creating an electrochemical gradient over the inner membrane that drives transmembrane transport and the ATP synthase. Cytochrome c oxidase is the component of the respiratory chain that catalyzes the reduction of oxygen to water. Electrons originating from reduced cytochrome c in the intermembrane space (IMS) are transferred via the dinuclear copper A center (CU(A)) of subunit 2 and heme A of subunit 1 to the active site in subunit 1, a binuclear center (BNC) formed by heme A3 and copper B (CU(B)). The BNC reduces molecular oxygen to 2 water molecules using 4 electrons from cytochrome c in the IMS and 4 protons from the mitochondrial matrix. The sequence is that of Cytochrome c oxidase subunit 9, mitochondrial (COX9) from Debaryomyces hansenii (strain ATCC 36239 / CBS 767 / BCRC 21394 / JCM 1990 / NBRC 0083 / IGC 2968) (Yeast).